The primary structure comprises 432 residues: Protein trichome birefringence-like 23 (432 aa).

The helical; Signal-anchor for type II membrane protein transmembrane segment at 13–35 (QNTYLIKLVAATLITCLAFRFFV) threads the bilayer. The GDS motif motif lies at 153-155 (GDS). Residues 404–418 (DCLHWCLPGPIDHLN) carry the DCXHWCLPGXXDXWN motif motif.

This sequence belongs to the PC-esterase family. TBL subfamily.

Its subcellular location is the membrane. In terms of biological role, may act as a bridging protein that binds pectin and other cell wall polysaccharides. Probably involved in maintaining esterification of pectins. May be involved in the specific O-acetylation of cell wall polymers. This chain is Protein trichome birefringence-like 23 (TBL23), found in Arabidopsis thaliana (Mouse-ear cress).